Here is a 385-residue protein sequence, read N- to C-terminus: MNENREQVLKNVKRVLIKIGSAVLTGDNGLDLERIQHLVDQMAALTHRGYQVVMVTSGAIASGKHRLGITTALKSIPQKQAAAAIGQGRLMRIYSNSFGKHGLYVGQILLTMSDLTDRRRFLNIRNTLSTLMEWGIIAIINENDTVAIDEIKFGDNDNLAAMIANIIEAHLVINLTSTPGLYDRNPASSRNARLIPLVREITEDIEAAASEEGTSVGTGGMKSKVMAAKKVTAFGIPYIIAPGKQKDVLLDIFDGNELGTLFLPMREHLSSRKYWIAFTLRSRGVLSIDAGARTAILEEGKSLLPSGIVGVEGDFIVGDPVTCVDRDGVPLAKGLVNYSAPDIRKIMGLKTSRIEQVLGHKDYDEIIHRDNLAVIRRSRRHREAG.

Position 18 (Lys18) interacts with ATP. Residues Ser57, Asp144, and Asn156 each contribute to the substrate site. Residue 218 to 224 (TGGMKSK) participates in ATP binding. Residues 283-361 (RGVLSIDAGA…SRIEQVLGHK (79 aa)) enclose the PUA domain.

This sequence belongs to the glutamate 5-kinase family.

Its subcellular location is the cytoplasm. It catalyses the reaction L-glutamate + ATP = L-glutamyl 5-phosphate + ADP. The protein operates within amino-acid biosynthesis; L-proline biosynthesis; L-glutamate 5-semialdehyde from L-glutamate: step 1/2. In terms of biological role, catalyzes the transfer of a phosphate group to glutamate to form L-glutamate 5-phosphate. The sequence is that of Glutamate 5-kinase from Syntrophus aciditrophicus (strain SB).